We begin with the raw amino-acid sequence, 556 residues long: Arginine--tRNA ligase (556 aa).

A 'HIGH' region motif is present at residues 132–142; it reads VNPTGDLHLGH.

Belongs to the class-I aminoacyl-tRNA synthetase family. In terms of assembly, monomer.

It localises to the cytoplasm. The enzyme catalyses tRNA(Arg) + L-arginine + ATP = L-arginyl-tRNA(Arg) + AMP + diphosphate. The sequence is that of Arginine--tRNA ligase from Oceanobacillus iheyensis (strain DSM 14371 / CIP 107618 / JCM 11309 / KCTC 3954 / HTE831).